The primary structure comprises 760 residues: Ring-infected erythrocyte surface antigen (760 aa).

Residues 214 to 300 (DTSQEESVEE…SDVQQTSEAA (87 aa)) are disordered. Acidic residues predominate over residues 216–230 (SQEESVEENEEEHTV). The segment covering 231 to 242 (DDEHVEEHTADD) has biased composition (basic and acidic residues). The segment covering 243–256 (EHVEEPTVADDEHV) has biased composition (acidic residues). The span at 262 to 288 (ADEHVEEPTVAEEHVEEPTVAEEHVEE) shows a compositional bias: basic and acidic residues. Positions 307-375 (DTLYYDILGV…KRWYNKYGYD (69 aa)) constitute a J domain. N-linked (GlcNAc...) asparagine glycosylation is found at N425, N559, and N563. The segment covering 683-692 (EHDAEENVEH) has biased composition (basic and acidic residues). Residues 683–738 (EHDAEENVEHDAEENAEENVEENVEEVEENVEENVEENVGEKKMRREEKKKRVQEP) form a disordered region. A compositionally biased stretch (acidic residues) spans 693–720 (DAEENAEENVEENVEEVEENVEENVEEN).

The protein localises to the cell membrane. In terms of biological role, may disrupt the normal intermolecular interactions of the cytoplasmic domain of band 3 and thereby facilitate the invagination of the red cell membrane which is necessary for the formation of the parasitophorous vacuole. The polypeptide is Ring-infected erythrocyte surface antigen (RESA) (Plasmodium falciparum (isolate NF7 / Ghana)).